An 85-amino-acid polypeptide reads, in one-letter code: Large ribosomal subunit protein bL27 (85 aa).

Residues 1–23 (MAHKKGQGSTQNNRDSAGRRLGV) form a disordered region.

This sequence belongs to the bacterial ribosomal protein bL27 family.

This Aliarcobacter butzleri (strain RM4018) (Arcobacter butzleri) protein is Large ribosomal subunit protein bL27.